Consider the following 451-residue polypeptide: Serine--tRNA ligase, cytoplasmic (451 aa).

The cysteines at positions 213 and 244 are disulfide-linked. 238 to 240 (TAE) serves as a coordination point for L-serine. Residues 269–271 (RKE) and V285 contribute to the ATP site. E292 contacts L-serine. 358 to 361 (ELVS) contacts ATP. T396 lines the L-serine pocket.

This sequence belongs to the class-II aminoacyl-tRNA synthetase family. Type-1 seryl-tRNA synthetase subfamily. As to quaternary structure, homodimer. The tRNA molecule binds across the dimer.

It localises to the cytoplasm. Its subcellular location is the cytosol. The enzyme catalyses tRNA(Ser) + L-serine + ATP = L-seryl-tRNA(Ser) + AMP + diphosphate + H(+). Its function is as follows. Catalyzes the attachment of serine to tRNA(Ser) in a two-step reaction: serine is first activated by ATP to form Ser-AMP and then transferred to the acceptor end of tRNA(Ser). This is Serine--tRNA ligase, cytoplasmic from Arabidopsis thaliana (Mouse-ear cress).